The chain runs to 353 residues: tRNA-specific 2-thiouridylase MnmA 2 (353 aa).

Residues 9 to 16 and Met-35 contribute to the ATP site; that span reads AMSGGVDS. The Nucleophile role is filled by Cys-98. Cysteines 98 and 194 form a disulfide. Gly-122 lines the ATP pocket. Residues 144–146 are interaction with tRNA; the sequence is KDQ. Cys-194 acts as the Cysteine persulfide intermediate in catalysis. Positions 300-301 are interaction with tRNA; sequence RY.

It belongs to the MnmA/TRMU family.

It localises to the cytoplasm. It carries out the reaction S-sulfanyl-L-cysteinyl-[protein] + uridine(34) in tRNA + AH2 + ATP = 2-thiouridine(34) in tRNA + L-cysteinyl-[protein] + A + AMP + diphosphate + H(+). Its function is as follows. Catalyzes the 2-thiolation of uridine at the wobble position (U34) of tRNA, leading to the formation of s(2)U34. The protein is tRNA-specific 2-thiouridylase MnmA 2 of Clostridium botulinum (strain Langeland / NCTC 10281 / Type F).